The sequence spans 172 residues: uncharacterized protein (172 aa).

The protein belongs to the flavoredoxin family. The cofactor is FMN.

This is an uncharacterized protein from Pyrococcus horikoshii (strain ATCC 700860 / DSM 12428 / JCM 9974 / NBRC 100139 / OT-3).